The following is a 280-amino-acid chain: Thioesterase pynI (280 aa).

A compositionally biased stretch (acidic residues) spans 136-145; sequence LADDSDDEDN. The segment at 136-167 is disordered; the sequence is LADDSDDEDNRSDASDASDDGSTMSDEEEEDD.

It belongs to the AMT4 thioesterase family.

It participates in secondary metabolite biosynthesis. Thioesterase; part of the gene cluster that mediates the biosynthesis of pyranonigrins, a family of antioxidative compounds. The first step of pyranonigrins biosynthesis is performed by the hybrid PKS-NRPS synthetase that condenses 6 malonyl-CoA units to an acetyl starter unit, to form a 1,3,5-trioxotetradecane-6,8-dienyl-ACP. The enoyl reductase (ER) domain of pynA is likely to be functional during the first two rounds of polyketide chain extension, to generate the saturated C-C bonds of the alkyl side chain. PynA subsequently forms the amide bond between the acyl chain and L-serine. Although pynA has a terminal reductase domain, it appears to require the thioesterase pynI for the release of the straight-chain intermediate from pynA via the formation of a tetramic acid pyranonigrin J. The methyltransferase pynC then coverts pyranonigrin J to pyranonigrin I via N-methylation. The FAD-dependent monooxygenase pynG catalyzes an epoxidation-mediated cyclization to form the dihydro-gamma-pyrone moiety, followed by pynD-catalyzed oxidation of the alcohol to the ketone and enolization to yield the characteristic tetramic acid-fused gamma-pyrone core of pyranonigrin H. Pyranonigrin H is substrate of pynH for dehydration-mediated exo-methylene formation from the serine side chain to produce pyranonigrin E, before the oxidase pynE reduces the exo-methylene of pyranonigrin E into a pendant methyl to form pyranonigrin G. The FAD-linked oxidoreductase pynB performs the reverse reaction and converts pyranonigrin G back to pyranonigrin E. The polypeptide is Thioesterase pynI (Aspergillus niger (strain ATCC MYA-4892 / CBS 513.88 / FGSC A1513)).